The primary structure comprises 476 residues: MKPILPDYNNAGVLIIGDVMLDRYWYGPTSRISPEAPVPVVKVENNEERPGGAANVAMNIASLGGHARIVGLTGMDEPAKVLTETLNSLKVKCDFVALPEYPTITKLRVMSRGQQLIRLDFEDKFEGTNPELVLTRMERALPHVQAVILSDYAKGALEHVEALIAKARAANVPVFIDPKGTNFEPYRGATLLTPNMSEFEAVVGKVTSDDDLVEKALGLIEKFELGALLVTRSEHGMTLVRPDQKPFHLPTQAKEVYDVTGAGDTVISVLAASVAAGKPLDEACALANAAAGVVVGKLGTSTLSTIELAEAIHGSRDTDFGVIAEAALIDAVKAAQAKGEKVVMTNGCFDILHAGHVSYLNNAAKLGDRLIVAVNTDESVKRLKGPGRPVNPTDRRMAVLAGLGAVDWVVPFSEDTPQRLISEVLPDLLVKGGDYKPEDIAGGKEVIAAGGEVKVLNFEDGCSTTEIIDAIKGGRG.

Residues Met-1 to Thr-318 form a ribokinase region. ATP is bound at residue Asn-195 to Glu-198. The active site involves Asp-264. The cytidylyltransferase stretch occupies residues Met-344–Gly-476.

In the N-terminal section; belongs to the carbohydrate kinase PfkB family. This sequence in the C-terminal section; belongs to the cytidylyltransferase family. Homodimer.

It catalyses the reaction D-glycero-beta-D-manno-heptose 7-phosphate + ATP = D-glycero-beta-D-manno-heptose 1,7-bisphosphate + ADP + H(+). The catalysed reaction is D-glycero-beta-D-manno-heptose 1-phosphate + ATP + H(+) = ADP-D-glycero-beta-D-manno-heptose + diphosphate. It functions in the pathway nucleotide-sugar biosynthesis; ADP-L-glycero-beta-D-manno-heptose biosynthesis; ADP-L-glycero-beta-D-manno-heptose from D-glycero-beta-D-manno-heptose 7-phosphate: step 1/4. It participates in nucleotide-sugar biosynthesis; ADP-L-glycero-beta-D-manno-heptose biosynthesis; ADP-L-glycero-beta-D-manno-heptose from D-glycero-beta-D-manno-heptose 7-phosphate: step 3/4. Its pathway is bacterial outer membrane biogenesis; LPS core biosynthesis. Its function is as follows. Catalyzes the phosphorylation of D-glycero-D-manno-heptose 7-phosphate at the C-1 position to selectively form D-glycero-beta-D-manno-heptose-1,7-bisphosphate. In terms of biological role, catalyzes the ADP transfer from ATP to D-glycero-beta-D-manno-heptose 1-phosphate, yielding ADP-D-glycero-beta-D-manno-heptose. This is Bifunctional protein HldE from Vibrio vulnificus (strain YJ016).